A 292-amino-acid chain; its full sequence is ATP synthase gamma chain (292 aa).

It belongs to the ATPase gamma chain family. As to quaternary structure, F-type ATPases have 2 components, CF(1) - the catalytic core - and CF(0) - the membrane proton channel. CF(1) has five subunits: alpha(3), beta(3), gamma(1), delta(1), epsilon(1). CF(0) has three main subunits: a, b and c.

Its subcellular location is the cell membrane. Its function is as follows. Produces ATP from ADP in the presence of a proton gradient across the membrane. The gamma chain is believed to be important in regulating ATPase activity and the flow of protons through the CF(0) complex. This Streptococcus pneumoniae (strain JJA) protein is ATP synthase gamma chain.